The sequence spans 767 residues: 5-methyltetrahydropteroyltriglutamate--homocysteine methyltransferase (767 aa).

Residues 17–20 (RELK) and Lys-117 contribute to the 5-methyltetrahydropteroyltri-L-glutamate site. L-homocysteine-binding positions include 441–443 (IGS) and Glu-494. L-methionine is bound by residues 441-443 (IGS) and Glu-494. 5-methyltetrahydropteroyltri-L-glutamate contacts are provided by residues 525–526 (RC) and Trp-571. Asp-609 contributes to the L-homocysteine binding site. Asp-609 contacts L-methionine. Glu-615 serves as a coordination point for 5-methyltetrahydropteroyltri-L-glutamate. Residues His-652, Cys-654, and Glu-676 each coordinate Zn(2+). His-705 (proton donor) is an active-site residue. Cys-737 serves as a coordination point for Zn(2+).

The protein belongs to the vitamin-B12 independent methionine synthase family. Zn(2+) serves as cofactor.

It catalyses the reaction 5-methyltetrahydropteroyltri-L-glutamate + L-homocysteine = tetrahydropteroyltri-L-glutamate + L-methionine. Its pathway is amino-acid biosynthesis; L-methionine biosynthesis via de novo pathway; L-methionine from L-homocysteine (MetE route): step 1/1. Functionally, catalyzes the transfer of a methyl group from 5-methyltetrahydrofolate to homocysteine resulting in methionine formation. The protein is 5-methyltetrahydropteroyltriglutamate--homocysteine methyltransferase of Bifidobacterium longum (strain NCC 2705).